The following is a 305-amino-acid chain: Homoserine O-succinyltransferase (305 aa).

The active-site Acyl-thioester intermediate is the Cys142. Residues Lys163 and Ser192 each contribute to the substrate site. His235 serves as the catalytic Proton acceptor. The active site involves Glu237. Arg249 contacts substrate.

This sequence belongs to the MetA family.

Its subcellular location is the cytoplasm. It carries out the reaction L-homoserine + succinyl-CoA = O-succinyl-L-homoserine + CoA. It participates in amino-acid biosynthesis; L-methionine biosynthesis via de novo pathway; O-succinyl-L-homoserine from L-homoserine: step 1/1. Functionally, transfers a succinyl group from succinyl-CoA to L-homoserine, forming succinyl-L-homoserine. This Psychromonas ingrahamii (strain DSM 17664 / CCUG 51855 / 37) protein is Homoserine O-succinyltransferase.